Reading from the N-terminus, the 250-residue chain is Ditrans,polycis-undecaprenyl-diphosphate synthase ((2E,6E)-farnesyl-diphosphate specific) (250 aa).

Asp-27 is an active-site residue. A Mg(2+)-binding site is contributed by Asp-27. Residues 28–31 (GNGR), Trp-32, Arg-40, His-44, and 72–74 (SSE) each bind substrate. The Proton acceptor role is filled by Asn-75. The substrate site is built by Trp-76, Arg-78, and Arg-195. Position 200 (His-200) interacts with Mg(2+). 201–203 (RIS) lines the substrate pocket. Glu-214 lines the Mg(2+) pocket.

Belongs to the UPP synthase family. Homodimer. Mg(2+) is required as a cofactor.

The enzyme catalyses 8 isopentenyl diphosphate + (2E,6E)-farnesyl diphosphate = di-trans,octa-cis-undecaprenyl diphosphate + 8 diphosphate. Catalyzes the sequential condensation of isopentenyl diphosphate (IPP) with (2E,6E)-farnesyl diphosphate (E,E-FPP) to yield (2Z,6Z,10Z,14Z,18Z,22Z,26Z,30Z,34E,38E)-undecaprenyl diphosphate (di-trans,octa-cis-UPP). UPP is the precursor of glycosyl carrier lipid in the biosynthesis of bacterial cell wall polysaccharide components such as peptidoglycan and lipopolysaccharide. In Blochmanniella floridana, this protein is Ditrans,polycis-undecaprenyl-diphosphate synthase ((2E,6E)-farnesyl-diphosphate specific).